Consider the following 296-residue polypeptide: Ribosomal RNA small subunit methyltransferase H (296 aa).

S-adenosyl-L-methionine-binding positions include 38–40, glutamate 57, phenylalanine 80, aspartate 103, and histidine 110; that span reads GAH.

This sequence belongs to the methyltransferase superfamily. RsmH family.

Its subcellular location is the cytoplasm. The enzyme catalyses cytidine(1402) in 16S rRNA + S-adenosyl-L-methionine = N(4)-methylcytidine(1402) in 16S rRNA + S-adenosyl-L-homocysteine + H(+). In terms of biological role, specifically methylates the N4 position of cytidine in position 1402 (C1402) of 16S rRNA. The sequence is that of Ribosomal RNA small subunit methyltransferase H from Borrelia garinii subsp. bavariensis (strain ATCC BAA-2496 / DSM 23469 / PBi) (Borreliella bavariensis).